The sequence spans 130 residues: Glycine cleavage system H protein (130 aa).

The 83-residue stretch at 24 to 106 (TATVGITDFA…YGDGWMFKVK (83 aa)) folds into the Lipoyl-binding domain. The residue at position 65 (Lys-65) is an N6-lipoyllysine.

Belongs to the GcvH family. As to quaternary structure, the glycine cleavage system is composed of four proteins: P, T, L and H. (R)-lipoate serves as cofactor.

Its function is as follows. The glycine cleavage system catalyzes the degradation of glycine. The H protein shuttles the methylamine group of glycine from the P protein to the T protein. This Marinobacter nauticus (strain ATCC 700491 / DSM 11845 / VT8) (Marinobacter aquaeolei) protein is Glycine cleavage system H protein.